The chain runs to 537 residues: Sodium/hydrogen exchanger 9B2 (537 aa).

A compositionally biased stretch (basic and acidic residues) spans 1–10 (MGDEDKRITY). The tract at residues 1–33 (MGDEDKRITYEDSEPSTGMNYTPSMHQETQEET) is disordered. Residues 1 to 86 (MGDEDKRITY…ACPPHGLLDR (86 aa)) lie on the Cytoplasmic side of the membrane. The span at 15–27 (PSTGMNYTPSMHQ) shows a compositional bias: polar residues. A Phosphoserine modification is found at serine 49. The chain crosses the membrane as a helical span at residues 87-104 (VVTNVTIIVLLWAVIWSI). Over 105–113 (TGSECLPGG) the chain is Extracellular. The helical transmembrane segment at 114-133 (NLFGIIILFYCAIIGGKLLG) threads the bilayer. Over 134-144 (LIKLPTLPPLP) the chain is Cytoplasmic. Residues 145–161 (SLLGMLLAGFLIRNIPV) form a helical membrane-spanning segment. The Extracellular segment spans residues 162-171 (INDNVQIKHK). Residues 172-189 (WSSSLRSIALSIILVRAG) form a helical membrane-spanning segment. The Cytoplasmic portion of the chain corresponds to 190 to 200 (LGLDSKALKKL). The helical transmembrane segment at 201–227 (KGVCVRLSMGPCIVEACTSALLAHYLL) threads the bilayer. Over 228-233 (GLPWQW) the chain is Extracellular. Residues 234–242 (GFILGFVLG) form a helical membrane-spanning segment. Residues 243–270 (AVSPAVVVPSMLLLQGGGYGVEKGVPTL) are Cytoplasmic-facing. Residues valine 244, glycine 275, aspartate 278, and aspartate 279 each contribute to the Na(+) site. Residues 271 to 290 (LMAAGSFDDILAITGFNTCL) traverse the membrane as a helical segment. Topologically, residues 291-300 (GIAFSTGSTV) are extracellular. A helical transmembrane segment spans residues 301–324 (FNVLRGVLEVVIGVATGSVLGFFI). At 325–339 (QYFPSCDQDKLVCKR) the chain is on the cytoplasmic side. Residues 340–357 (TFLVLGLSVLAVFSSVHF) form a helical membrane-spanning segment. Residues 358 to 361 (GFPG) lie on the Extracellular side of the membrane. A helical transmembrane segment spans residues 362–373 (SGGLCTLVMAFL). At 374 to 390 (AGMGWTSEKAEVEKIIA) the chain is on the cytoplasmic side. The helical transmembrane segment at 391-411 (VAWDIFQPLLFGLIGAEVSIA) threads the bilayer. Over 412 to 417 (SLRPET) the chain is Extracellular. A helical transmembrane segment spans residues 418 to 440 (VGLCVATVGIAVLIRILTTFLMV). Over 441–461 (CFAGFNLKEKIFISFAWLPKA) the chain is Cytoplasmic. A helical membrane pass occupies residues 462–473 (TVQAAIGSVALD). At 474–486 (TARSHGEKQLEDY) the chain is on the extracellular side. The helical transmembrane segment at 487 to 509 (GMDVLTVAFLSILITAPIGSLLI) threads the bilayer. The Cytoplasmic portion of the chain corresponds to 510 to 537 (GLLGPRLLQKVEHQNKDEEVQGETSVQV).

Belongs to the monovalent cation:proton antiporter 1 (CPA1) transporter (TC 2.A.36) family. As to quaternary structure, homodimer; dimerization is essential for SLC9B2 activity. Lipids seem to play a role in the stabilization of the dimerization subdomain.

Its subcellular location is the cell membrane. It localises to the mitochondrion membrane. It is found in the endosome membrane. The protein localises to the recycling endosome membrane. The protein resides in the cytoplasmic vesicle. Its subcellular location is the secretory vesicle. It localises to the synaptic vesicle membrane. It is found in the basolateral cell membrane. The protein localises to the apical cell membrane. It catalyses the reaction Li(+)(out) + H(+)(in) = Li(+)(in) + H(+)(out). It carries out the reaction Li(+)(in) + Na(+)(out) = Li(+)(out) + Na(+)(in). The enzyme catalyses Na(+)(in) + H(+)(out) = Na(+)(out) + H(+)(in). Its activity is regulated as follows. Allosterically inhibited by the N-terminal domain. Inhibited by phloretin. In terms of biological role, electroneutral Na(+) Li(+)/H(+) antiporter that extrudes Na(+) or Li(+) in exchange for external protons across the membrane. Uses the proton gradient/membrane potential to extrude sodium. Contributes to the regulation of intracellular pH and sodium homeostasis. Also able to mediate Na(+)/Li(+) antiporter activity in kidney. May play a physiological role in renal tubular function and blood pressure homeostasis. Plays an important role for insulin secretion and clathrin-mediated endocytosis in beta-cells. Involved in sperm motility and fertility. It is controversial whether SLC9B2 plays a role in osteoclast differentiation or not. The polypeptide is Sodium/hydrogen exchanger 9B2 (SLC9B2) (Pongo abelii (Sumatran orangutan)).